Here is a 111-residue protein sequence, read N- to C-terminus: Cornifelin homolog B (111 aa).

The protein belongs to the cornifelin family.

The polypeptide is Cornifelin homolog B (cnfn-b) (Xenopus laevis (African clawed frog)).